The primary structure comprises 343 residues: Uroporphyrinogen decarboxylase (343 aa).

Residues 23–27 (RQAGR), F42, D73, Y150, S205, and H322 each bind substrate.

Belongs to the uroporphyrinogen decarboxylase family. Homodimer.

The protein resides in the cytoplasm. The enzyme catalyses uroporphyrinogen III + 4 H(+) = coproporphyrinogen III + 4 CO2. It functions in the pathway porphyrin-containing compound metabolism; protoporphyrin-IX biosynthesis; coproporphyrinogen-III from 5-aminolevulinate: step 4/4. Its activity is regulated as follows. Inhibited by N-ethyl-maleimide and phenylglyoxal. In terms of biological role, catalyzes the decarboxylation of four acetate groups of uroporphyrinogen-III to yield coproporphyrinogen-III. This is Uroporphyrinogen decarboxylase (hemE) from Cereibacter sphaeroides (strain ATCC 17023 / DSM 158 / JCM 6121 / CCUG 31486 / LMG 2827 / NBRC 12203 / NCIMB 8253 / ATH 2.4.1.) (Rhodobacter sphaeroides).